Consider the following 63-residue polypeptide: Large ribosomal subunit protein bL28 (63 aa).

Belongs to the bacterial ribosomal protein bL28 family.

In Clostridium beijerinckii (strain ATCC 51743 / NCIMB 8052) (Clostridium acetobutylicum), this protein is Large ribosomal subunit protein bL28.